Reading from the N-terminus, the 639-residue chain is MISRTIGESIPPNTKHAVSVCLPTWEATVGYEEGESSIINSLTTGYPRFFIHKSIKKLCEILSAKYSMEDEACLCFPSYKVANRCREFIKVKTGLSTKVRILQLCTPKPMNQEEKLWRRECKITVVFVDQEIFPVMKQYWQHSGEIVSSRMAEYILHELQVKDNLKKMETVDNGKKFMTEDENRVNEEYIETRFGRNLNFLAADKAKYLIRKRIATKVVEKIDSEGLSDLFSFEHYNESNGPFNVGSGEALDDDQLNSDIPAETITSMGESGSNSTFENTATDDLKFHVNPNTDVYLFPSGMASIFTAHRLLLNFDAKRLSRSSSRQDKLIGYGPPFKKTVMFGFPYTDTLSILRKFNHTHFLGQGDSTSMNALKNILHSGEQILAVFIEAPSNPLLKMGDLQELKRLSDLYSFYIVVDETVGGFVNIDVLPYADIVCSSLTKIFSGDSNVIAGSLVLNPRGKIYEFARKFMKTEDGYEDCLWCEDALCLERNSRDFVERTIKVNTNTDILLKRVLLPQVGKLFKKIYYPSLTSEDTKRNYDSVMSTKDGGYGGLFSLTFFNIEEAKKFFNNLELCKGPSLGTNFTLACPYAIIAHYQELDEVAQYGVETNLVRVSVGLENSDVLCNVFQRAIEKALGE.

Lys443 is modified (N6-(pyridoxal phosphate)lysine).

The protein belongs to the trans-sulfuration enzymes family. MET7 subfamily. Pyridoxal 5'-phosphate serves as cofactor.

Its subcellular location is the cytoplasm. The protein localises to the nucleus. The enzyme catalyses O-succinyl-L-homoserine + L-cysteine = L,L-cystathionine + succinate + H(+). It functions in the pathway amino-acid biosynthesis; L-methionine biosynthesis via de novo pathway; L-cystathionine from O-succinyl-L-homoserine: step 1/1. In terms of biological role, catalyzes the formation of L-cystathionine from O-succinyl-L-homoserine (OSHS) and L-cysteine, via a gamma-replacement reaction. In the absence of thiol, catalyzes gamma-elimination to form 2-oxobutanoate, succinate and ammonia. This is Cystathionine gamma-synthase from Saccharomyces cerevisiae (strain ATCC 204508 / S288c) (Baker's yeast).